A 557-amino-acid polypeptide reads, in one-letter code: Dihydroxy-acid dehydratase (557 aa).

Asp78 is a Mg(2+) binding site. Cys119 contacts [2Fe-2S] cluster. Mg(2+) is bound by residues Asp120 and Lys121. Lys121 carries the N6-carboxylysine modification. Cys192 is a [2Fe-2S] cluster binding site. Glu442 provides a ligand contact to Mg(2+). Ser468 functions as the Proton acceptor in the catalytic mechanism.

Belongs to the IlvD/Edd family. Homodimer. Requires [2Fe-2S] cluster as cofactor. Mg(2+) serves as cofactor.

It catalyses the reaction (2R)-2,3-dihydroxy-3-methylbutanoate = 3-methyl-2-oxobutanoate + H2O. The enzyme catalyses (2R,3R)-2,3-dihydroxy-3-methylpentanoate = (S)-3-methyl-2-oxopentanoate + H2O. It functions in the pathway amino-acid biosynthesis; L-isoleucine biosynthesis; L-isoleucine from 2-oxobutanoate: step 3/4. Its pathway is amino-acid biosynthesis; L-valine biosynthesis; L-valine from pyruvate: step 3/4. Functionally, functions in the biosynthesis of branched-chain amino acids. Catalyzes the dehydration of (2R,3R)-2,3-dihydroxy-3-methylpentanoate (2,3-dihydroxy-3-methylvalerate) into 2-oxo-3-methylpentanoate (2-oxo-3-methylvalerate) and of (2R)-2,3-dihydroxy-3-methylbutanoate (2,3-dihydroxyisovalerate) into 2-oxo-3-methylbutanoate (2-oxoisovalerate), the penultimate precursor to L-isoleucine and L-valine, respectively. The chain is Dihydroxy-acid dehydratase from Bacillus cereus (strain ZK / E33L).